The chain runs to 878 residues: MAPRASSPALSENEFDIFDALAGGDEAAQPMRVTADLGIDLEFGSDDGSDDEAFIAAKQAAANRKNANAPGKSGKKGGGFQAMGLNVALLKAIAQKGFKIPTPIQRKAVPLILQGDDVVGMARTGSGKTAAFVIPMIERLKTHSAKVGARGVIMSPSRELALQTLKVVKEFGRGTDLRTILLVGGDSLEEQFNSMTTNPDIIIATPGRFLHLKVEMGLDLSSVQYIVFDEADRLFEMGFAAQLAEILYALPTSRQTLLFSATLPKSLVEFARAGLQEPKLIRLDAESKISPDLKSAYFTIKSGDRDGALIHLLENVIKMPVGQTEVWKQAKEEADNLSKGKKRKRGSGNPKDAPVEESTIIFAATKHRVEYLSTLLKAAGYPVSYVYGNLDQTARQEQVKDFRAGLTRILVVTDVAARGYRHATHKPRHQLRLPFSTKNLCSSSGEDGPRWAEGLGIQPVQTCRSAISHRLTNVPWQTPSGCLAPYQLEPSVELVNKQLTDDEDLVNLLNVAEKGERQYQRTRNQASNQSVHRAKDLASDSKFAETHMLFNDEMHDALRAKEDMLERIQGFRPAETVFEIGKRGTNSEAAEIMRKRRVAVERQKTKQAFNKANDESSGLTRPTADALPDDELDSEDDQQAAVGDYESESDELEVTVSQPESKKSGKDVWRSDEFFMSYLPKENFAEEKAYGVQGGDAGNSNFVSAARSAEMSLVNDEIQGFADASKPRMRWDKKSKKYVSRANDEDGSKGAKMIRGESGQKIAASFRSGRFDDWRKANKVKMQRVGEMEAPNRSTQFNSGGPRYKHKAEKAPKQADRYRDDYHVQKQRVQEAKEKRIGHFKDGGAKNELKDVDTVRKERRVQEKRKEKNARPSKKRKF.

Positions 78-106 (GGFQAMGLNVALLKAIAQKGFKIPTPIQR) match the Q motif motif. Residues 109-281 (VPLILQGDDV…RAGLQEPKLI (173 aa)) form the Helicase ATP-binding domain. Position 122–129 (122–129 (ARTGSGKT)) interacts with ATP. Positions 229-232 (DEAD) match the DEAD box motif. Disordered stretches follow at residues 332–354 (EEAD…KDAP), 517–536 (RQYQ…RAKD), 601–666 (ERQK…KSGK), 726–758 (KPRM…RGES), and 787–878 (EMEA…KRKF). The Helicase C-terminal domain maps to 349 to 538 (NPKDAPVEES…QSVHRAKDLA (190 aa)). Polar residues-rich tracts occupy residues 521-531 (RTRNQASNQSV) and 606-620 (KQAF…SGLT). The segment covering 627–638 (LPDDELDSEDDQ) has biased composition (acidic residues). The segment covering 809-870 (EKAPKQADRY…VQEKRKEKNA (62 aa)) has biased composition (basic and acidic residues).

Belongs to the DEAD box helicase family. DDX54/DBP10 subfamily.

The protein resides in the nucleus. It localises to the nucleolus. It carries out the reaction ATP + H2O = ADP + phosphate + H(+). Its function is as follows. ATP-binding RNA helicase involved in the biogenesis of 60S ribosomal subunits and is required for the normal formation of 25S and 5.8S rRNAs. The protein is ATP-dependent RNA helicase DBP10 (DBP10) of Phaeosphaeria nodorum (strain SN15 / ATCC MYA-4574 / FGSC 10173) (Glume blotch fungus).